We begin with the raw amino-acid sequence, 239 residues long: 7-cyano-7-deazaguanine synthase (239 aa).

An ATP-binding site is contributed by 8–18; that stretch reads FSGGLDSTACL. Residues Cys194, Cys209, Cys212, and Cys215 each contribute to the Zn(2+) site.

This sequence belongs to the QueC family. It depends on Zn(2+) as a cofactor.

The catalysed reaction is 7-carboxy-7-deazaguanine + NH4(+) + ATP = 7-cyano-7-deazaguanine + ADP + phosphate + H2O + H(+). Its pathway is purine metabolism; 7-cyano-7-deazaguanine biosynthesis. Catalyzes the ATP-dependent conversion of 7-carboxy-7-deazaguanine (CDG) to 7-cyano-7-deazaguanine (preQ(0)). This is 7-cyano-7-deazaguanine synthase from Pyrococcus horikoshii (strain ATCC 700860 / DSM 12428 / JCM 9974 / NBRC 100139 / OT-3).